A 356-amino-acid polypeptide reads, in one-letter code: GTPase HflX (356 aa).

Positions 180–356 (PSIGIVGYTN…KIYQLATQLS (177 aa)) constitute a Hflx-type G domain. Residues 186–193 (GYTNSGKT), 211–215 (FTTMS), 232–235 (DTVG), 300–303 (NKID), and 334–336 (SAL) each bind GTP. Positions 193 and 213 each coordinate Mg(2+).

This sequence belongs to the TRAFAC class OBG-HflX-like GTPase superfamily. HflX GTPase family. Monomer. Associates with the 50S ribosomal subunit. Does not associate with 70S ribosomes. Mg(2+) is required as a cofactor.

The protein localises to the cytoplasm. Its activity is regulated as follows. GTPase activity is stimulated by the presence of 50S ribosomal subunits. Hydrolysis is probably regulated by the HflX N-terminal domain. In terms of biological role, GTPase that associates with the 50S ribosomal subunit and may have a role during protein synthesis or ribosome biogenesis. Specific for GTP. In Saccharolobus solfataricus (strain ATCC 35092 / DSM 1617 / JCM 11322 / P2) (Sulfolobus solfataricus), this protein is GTPase HflX.